Consider the following 517-residue polypeptide: MEKIQRYLQLERSQQHDFLYPLIFQEYIYAFADDRTFSRXXSILSGNPDSENLGSRKKYSLLIVKRLITRMYQQNHFLISSNDSNQNKNPFWGRNKDFYSQILAEGFAFIVEIPFSLQLLSSLGGKKKRVVNSQNLRSIHSIFPFLEDNFSHLHFVLDILIPHPVHVEILIQTLRYRVKDVSSLHLLRFLLNEYCNCNSIITTKKAGSSFSKRNQRLFLFLYNSHVCEYESVFGFLRNQSFHLRSASSGALLERIYFYGKVERLVNAFDKVKDYQVNLWLVKEPSMHYVRYQRKSILASKGTSHFMNKWKCYLITFWQWHFALWFHPRRISRNQLANYFLEFVGYLSNIRTNPTVVRSQSLQNXFLINNAIKKFETLVPIIPLISSLAKAKFCNVLGHPTSKPVWADLSDSNIIYRFVHICRNLSHYYSGSSKKKSLYRIKYILRLSCARTLARKHKSTVRVFLKTLGSGLLEEFLISEEDVLCWTFPKTSSALRGVYKSRIWYLDIICINDLANLK.

The protein belongs to the intron maturase 2 family. MatK subfamily.

It is found in the plastid. The protein resides in the chloroplast. Functionally, usually encoded in the trnK tRNA gene intron. Probably assists in splicing its own and other chloroplast group II introns. The protein is Maturase K of Veronica arvensis (Wall speedwell).